The primary structure comprises 357 residues: Uroporphyrinogen decarboxylase (357 aa).

Residues 30–34, D79, Y154, S209, and H336 each bind substrate; that span reads RQAGR.

It belongs to the uroporphyrinogen decarboxylase family. As to quaternary structure, homodimer.

The protein resides in the cytoplasm. The enzyme catalyses uroporphyrinogen III + 4 H(+) = coproporphyrinogen III + 4 CO2. Its pathway is porphyrin-containing compound metabolism; protoporphyrin-IX biosynthesis; coproporphyrinogen-III from 5-aminolevulinate: step 4/4. Its function is as follows. Catalyzes the decarboxylation of four acetate groups of uroporphyrinogen-III to yield coproporphyrinogen-III. The protein is Uroporphyrinogen decarboxylase of Mycobacterium leprae (strain Br4923).